A 489-amino-acid polypeptide reads, in one-letter code: Putative ATP-dependent RNA helicase T26G10.1 (489 aa).

Positions 44 to 72 match the Q motif motif; the sequence is KSFAELGVSQPLCDACQRLGWMKPSKIQQ. The 172-residue stretch at 75–246 folds into the Helicase ATP-binding domain; it reads LPHALQGKDV…RASLRDPARV (172 aa). 88-95 is a binding site for ATP; it reads AETGSGKT. The DEAD box signature appears at 194-197; the sequence is DEAD. Residues 257 to 417 enclose the Helicase C-terminal domain; sequence NLKQHYIFVP…EYKCVENEVM (161 aa). The tract at residues 433–489 is disordered; the sequence is EMKEMDEKKKSGKKRRQNDDFGDTEESGGRFKMGIKSMGGRGGSGGGRGGKKKKMSK. The span at 469–480 shows a compositional bias: gly residues; that stretch reads SMGGRGGSGGGR.

It belongs to the DEAD box helicase family. DDX47/RRP3 subfamily.

It localises to the nucleus. The catalysed reaction is ATP + H2O = ADP + phosphate + H(+). Probable ATP-dependent RNA helicase which may be involved in ribosome biogenesis. This is Putative ATP-dependent RNA helicase T26G10.1 from Caenorhabditis elegans.